Here is a 327-residue protein sequence, read N- to C-terminus: Beta-ketoacyl-[acyl-carrier-protein] synthase III 2 (327 aa).

Catalysis depends on residues cysteine 114 and histidine 251. An ACP-binding region spans residues 252–256 (SANLR). Asparagine 281 is an active-site residue.

The protein belongs to the thiolase-like superfamily. FabH family. In terms of assembly, homodimer.

It is found in the cytoplasm. It catalyses the reaction malonyl-[ACP] + acetyl-CoA + H(+) = 3-oxobutanoyl-[ACP] + CO2 + CoA. The protein operates within lipid metabolism; fatty acid biosynthesis. Catalyzes the condensation reaction of fatty acid synthesis by the addition to an acyl acceptor of two carbons from malonyl-ACP. Catalyzes the first condensation reaction which initiates fatty acid synthesis and may therefore play a role in governing the total rate of fatty acid production. Possesses both acetoacetyl-ACP synthase and acetyl transacylase activities. Its substrate specificity determines the biosynthesis of branched-chain and/or straight-chain of fatty acids. The chain is Beta-ketoacyl-[acyl-carrier-protein] synthase III 2 from Bacillus anthracis.